The primary structure comprises 352 residues: Small ribosomal subunit biogenesis GTPase RsgA (352 aa).

Residues 1–15 show a composition bias toward basic residues; the sequence is MTKRKLTQNQKRRIH. Residues 1 to 26 form a disordered region; sequence MTKRKLTQNQKRRIHSNNVKALDRHH. The region spanning 106–274 is the CP-type G domain; it reads ENEIARPDYY…LIDSPGIREF (169 aa). GTP-binding positions include 162–165 and 216–224; these read NKVD and GQSGVGKSS. 4 residues coordinate Zn(2+): cysteine 298, cysteine 303, histidine 305, and cysteine 311.

The protein belongs to the TRAFAC class YlqF/YawG GTPase family. RsgA subfamily. As to quaternary structure, monomer. Associates with 30S ribosomal subunit, binds 16S rRNA. Zn(2+) serves as cofactor.

It is found in the cytoplasm. Functionally, one of several proteins that assist in the late maturation steps of the functional core of the 30S ribosomal subunit. Helps release RbfA from mature subunits. May play a role in the assembly of ribosomal proteins into the subunit. Circularly permuted GTPase that catalyzes slow GTP hydrolysis, GTPase activity is stimulated by the 30S ribosomal subunit. This is Small ribosomal subunit biogenesis GTPase RsgA from Mannheimia succiniciproducens (strain KCTC 0769BP / MBEL55E).